We begin with the raw amino-acid sequence, 229 residues long: ABC transporter I family member 1 (229 aa).

The region spanning 11–228 (LLLQNVSCMR…LIDMLDRADI (218 aa)) is the ABC transporter domain. 43 to 50 (GTNGSGKS) lines the ATP pocket.

The protein belongs to the ABC transporter superfamily. ABCI family.

It localises to the membrane. It catalyses the reaction heme b(in) + ATP + H2O = heme b(out) + ADP + phosphate + H(+). In terms of biological role, part of the ABC transporter complex CcmAB involved in the biogenesis of c-type cytochromes; once thought to export heme, this seems not to be the case, but its exact role is uncertain. Responsible for energy coupling to the transport system. The protein is ABC transporter I family member 1 (ABCI1) of Arabidopsis thaliana (Mouse-ear cress).